The primary structure comprises 161 residues: Gamma-glutamylaminecyclotransferase A (161 aa).

26-29 (YGTL) provides a ligand contact to substrate. Glu-101 serves as the catalytic Proton acceptor.

The protein belongs to the gamma-glutamylcyclotransferase family.

The catalysed reaction is epsilon-(gamma-L-glutamyl)-L-lysine = 5-oxo-L-proline + L-lysine. May contribute to degradation of proteins cross-linked by transglutaminases by degrading the cross-link between a lysine and a glutamic acid residue. Catalyzes the formation of 5-oxo-L-proline from L-gamma-glutamyl-L-epsilon-lysine. The chain is Gamma-glutamylaminecyclotransferase A (ggact.1) from Danio rerio (Zebrafish).